The chain runs to 418 residues: UDP-N-acetyl-D-mannosamine dehydrogenase (418 aa).

Y10, I11, D30, T85, and T119 together coordinate NAD(+). Positions 152, 153, 204, 208, 211, 242, 244, 249, and 255 each coordinate UDP-N-acetyl-alpha-D-mannosaminouronate. The Proton donor/acceptor role is filled by K204. Residue C258 is the Nucleophile of the active site. Residue K261 participates in NAD(+) binding. UDP-N-acetyl-alpha-D-mannosaminouronate-binding residues include Y318 and K319. R326 is an NAD(+) binding site. A UDP-N-acetyl-alpha-D-mannosaminouronate-binding site is contributed by R398.

This sequence belongs to the UDP-glucose/GDP-mannose dehydrogenase family. In terms of assembly, homodimer.

It catalyses the reaction UDP-N-acetyl-alpha-D-mannosamine + 2 NAD(+) + H2O = UDP-N-acetyl-alpha-D-mannosaminouronate + 2 NADH + 3 H(+). Functionally, catalyzes the four-electron oxidation of UDP-N-acetyl-D-mannosamine (UDP-ManNAc), reducing NAD(+) and releasing UDP-N-acetylmannosaminuronic acid (UDP-ManNAcA). The chain is UDP-N-acetyl-D-mannosamine dehydrogenase from Pyrococcus horikoshii (strain ATCC 700860 / DSM 12428 / JCM 9974 / NBRC 100139 / OT-3).